Reading from the N-terminus, the 632-residue chain is Biosynthetic arginine decarboxylase (632 aa).

Lysine 101 carries the post-translational modification N6-(pyridoxal phosphate)lysine. Substrate is bound at residue phenylalanine 281–tyrosine 291.

It belongs to the Orn/Lys/Arg decarboxylase class-II family. SpeA subfamily. Requires Mg(2+) as cofactor. Pyridoxal 5'-phosphate is required as a cofactor.

It carries out the reaction L-arginine + H(+) = agmatine + CO2. It functions in the pathway amine and polyamine biosynthesis; agmatine biosynthesis; agmatine from L-arginine: step 1/1. Its function is as follows. Catalyzes the biosynthesis of agmatine from arginine. The sequence is that of Biosynthetic arginine decarboxylase from Klebsiella pneumoniae (strain 342).